Here is an 83-residue protein sequence, read N- to C-terminus: MEVKTLANIKSAIKRAELNVKQNEKNSAQKSALRTVIKAFKANPTEEAFRAASASIDKAASKGLIHKNKASRDKSRLAAKLAN.

The interval 60-83 (ASKGLIHKNKASRDKSRLAAKLAN) is disordered.

It belongs to the bacterial ribosomal protein bS20 family.

Binds directly to 16S ribosomal RNA. This is Small ribosomal subunit protein bS20 from Streptococcus thermophilus (strain CNRZ 1066).